The following is a 522-amino-acid chain: ATP synthase subunit alpha (522 aa).

176–183 (GDRQTGKT) is an ATP binding site.

It belongs to the ATPase alpha/beta chains family. In terms of assembly, F-type ATPases have 2 components, CF(1) - the catalytic core - and CF(0) - the membrane proton channel. CF(1) has five subunits: alpha(3), beta(3), gamma(1), delta(1), epsilon(1). CF(0) has four main subunits: a(1), b(1), b'(1) and c(9-12).

The protein localises to the cell membrane. It carries out the reaction ATP + H2O + 4 H(+)(in) = ADP + phosphate + 5 H(+)(out). Functionally, produces ATP from ADP in the presence of a proton gradient across the membrane. The alpha chain is a regulatory subunit. The polypeptide is ATP synthase subunit alpha (Chloroflexus aurantiacus (strain ATCC 29366 / DSM 635 / J-10-fl)).